A 161-amino-acid chain; its full sequence is Putative esterase C31F10.02 (161 aa).

It belongs to the thioesterase PaaI family.

The protein is Putative esterase C31F10.02 of Schizosaccharomyces pombe (strain 972 / ATCC 24843) (Fission yeast).